The sequence spans 528 residues: MPANKIDALFVNFLGNSPKWYKLAILSFLVINPLIFFFINPFVAGWVLVLEFIFTLAMALKCYPLQPGGLLAIQAVAIGMTSPSQVLHEIQANLEVLLLLIFMVAGIYFMKQLLLFVFTKMITKVRSKTYLSLLFCVAAAFLSAFLDALTVIAVIIAVGIGFYSIYHKVASGKDFSSDHDHTSESHDQLNADDLESFRGFLRNLLMHAGVGTALGGVCTMVGEPQNLIIAAQAHWQFGEFFIRMSPVTIPVLLSGLLTCVVVEKLKWFTYGVQLPENVHKILSDYDAYEDTHRSDRDKVKLIIQALVGVWLVAGLALHLASVGLIGLSVIILTTAFNGITDEHSLGKAFEEALPFTALLAVFFAIVGVIIDQRLFAPVIQWALTFEGNAQLVVFFIANGVLSMVSDNVFVGTVYINEVKSALLSGQITRDQFDLLAVAINTGTNLPSVATPNGQAAFLFLLTSALAPLIRLSYGRMVIMALPYTLVLSIVGIVTIESGFLVEMTQYFYDNNIIMHHSAKELTESVVGH.

Helical transmembrane passes span 11–31 (VNFL…FLVI), 67–87 (PGGL…SQVL), 98–118 (LLLI…LFVF), 140–160 (AFLS…AVGI), 240–260 (FFIR…LTCV), 311–331 (LVAG…SVII), 350–370 (EEAL…GVII), 391–411 (LVVF…VFVG), 449–469 (ATPN…APLI), and 476–496 (MVIM…VTIE).

This sequence belongs to the NhaB Na(+)/H(+) (TC 2.A.34) antiporter family.

Its subcellular location is the cell inner membrane. The catalysed reaction is 2 Na(+)(in) + 3 H(+)(out) = 2 Na(+)(out) + 3 H(+)(in). In terms of biological role, na(+)/H(+) antiporter that extrudes sodium in exchange for external protons. The protein is Na(+)/H(+) antiporter NhaB of Shewanella denitrificans (strain OS217 / ATCC BAA-1090 / DSM 15013).